A 619-amino-acid polypeptide reads, in one-letter code: Probable ATP-dependent RNA helicase DDX59 (619 aa).

The segment at 1–101 (MFVPRSLKIK…KSFSKTQRWP (101 aa)) is disordered. The span at 12-27 (SSNDDLKSGEAKKSKP) shows a compositional bias: basic and acidic residues. Lys26 is covalently cross-linked (Glycyl lysine isopeptide (Lys-Gly) (interchain with G-Cter in SUMO2)). Positions 59–76 (ASSTNSPSCQLAEVSSTG) are enriched in polar residues. Residue Ser64 is modified to Phosphoserine. Basic and acidic residues predominate over residues 79 to 91 (EGVKDSHPSEEPV). An HIT-type zinc finger spans residues 104–133 (GEPVCVVCGRYGEYICDKTDEDVCSLECKA). Position 160 is a phosphoserine (Ser160). Positions 203-231 (IDFEHCGFPETLNQNLKKSGYEVPTPIQM) match the Q motif motif. The region spanning 234 to 405 (IPVGLLGRDI…DQLLHNPVRI (172 aa)) is the Helicase ATP-binding domain. 247–254 (ADTGSGKT) contacts ATP. The DEAD box signature appears at 353–356 (DEAD). A Helicase C-terminal domain is found at 416–579 (SVRQIILWVE…ILPPQLLNSP (164 aa)). Residues 583–594 (EQKRKEQQKDRQ) are compositionally biased toward basic and acidic residues. The interval 583-603 (EQKRKEQQKDRQTQNSLVTGA) is disordered.

The protein belongs to the DEAD box helicase family. DDX59 subfamily. In terms of assembly, interacts (via HIT-type zinc finger) with the RUVBL1/RUVBL2 complex in the presence of ADP.

It is found in the cytoplasm. The protein localises to the nucleus. The catalysed reaction is ATP + H2O = ADP + phosphate + H(+). The protein is Probable ATP-dependent RNA helicase DDX59 (Ddx59) of Mus musculus (Mouse).